We begin with the raw amino-acid sequence, 376 residues long: Putative endoglucanase type K (376 aa).

Positions 1–18 are cleaved as a signal peptide; it reads MRSYTLLALAGPLAVSAA. A catalytic region spans residues 19-308; that stretch reads SGSGHSTRYW…ATKPAQPVNK (290 aa). Aspartate 29 acts as the Nucleophile in catalysis. The Proton donor role is filled by aspartate 140. The segment at 229 to 332 is disordered; it reads AFKGDTSASK…SCPAKTDATA (104 aa). Low complexity-rich tracts occupy residues 235–258 and 291–306; these read SASK…AQPQ and KPVA…AQPV. Residues 309–338 form a linker region; the sequence is PKTTQKVRGTKTRGSCPAKTDATAKASVVP. The CBM1 domain maps to 335–374; the sequence is SVVPAYYQCGGSKSAYPNGNLACATGSKCVKQNEYYSQCV.

This sequence belongs to the glycosyl hydrolase 45 (cellulase K) family.

It carries out the reaction Endohydrolysis of (1-&gt;4)-beta-D-glucosidic linkages in cellulose, lichenin and cereal beta-D-glucans.. The polypeptide is Putative endoglucanase type K (Fusarium oxysporum (Fusarium vascular wilt)).